Here is a 457-residue protein sequence, read N- to C-terminus: Acetylcholine receptor subunit alpha (457 aa).

An N-terminal signal peptide occupies residues 1-20 (MELSTVLLLLGLCSAGLVLG). Topologically, residues 21 to 230 (SEHETRLVAK…ITYHFVMQRL (210 aa)) are extracellular. Intrachain disulfides connect C148–C162 and C212–C213. N161 carries an N-linked (GlcNAc...) asparagine glycan. 3 helical membrane-spanning segments follow: residues 231–255 (PLYF…VFYL), 263–281 (MTLS…LVIV), and 297–316 (YMLF…VIVI). Residues 317-428 (NTHHRSPSTH…WKYVAMVMDH (112 aa)) lie on the Cytoplasmic side of the membrane. Residues 429-447 (ILLGVFMLVCLIGTLAVFA) traverse the membrane as a helical segment.

Belongs to the ligand-gated ion channel (TC 1.A.9) family. Acetylcholine receptor (TC 1.A.9.1) subfamily. Alpha-1/CHRNA1 sub-subfamily. As to quaternary structure, one of the alpha chains that assemble within the acetylcholine receptor, a pentamer of two alpha chains, a beta, a delta, and a gamma (in immature muscle) or epsilon (in mature muscle) chains. The muscle heteropentamer composed of alpha-1, beta-1, delta, epsilon subunits interacts with the alpha-conotoxin ImII.

It localises to the postsynaptic cell membrane. The protein resides in the cell membrane. It carries out the reaction K(+)(in) = K(+)(out). It catalyses the reaction Na(+)(in) = Na(+)(out). Functionally, upon acetylcholine binding, the AChR responds by an extensive change in conformation that affects all subunits and leads to opening of an ion-conducting channel across the plasma membrane. This Mus musculus (Mouse) protein is Acetylcholine receptor subunit alpha (Chrna1).